The sequence spans 671 residues: Synaptotagmin-like protein 4 (671 aa).

The RabBD domain maps to 4 to 122 (LLDLSFLSEE…KATGDWFYDQ (119 aa)). Residues 63–105 (CARCQESLGRLSPKTNTCRGCNHLVCRDCRIQESNGTWRCKVC) form an FYVE-type zinc finger. The segment at 199–243 (SESLDSFTADSDSTSRRDSLDKSGLFPEWKKMSAPKSQVEKETQP) is disordered. Serine 201, serine 204, serine 217, serine 221, serine 274, and serine 289 each carry phosphoserine. A C2 1 domain is found at 356–478 (VTGRIAFSLK…KLDKKLDHCL (123 aa)). Residue serine 488 is modified to Phosphoserine. The region spanning 507 to 633 (PASKTPVGGD…ISNGEVVDWM (127 aa)) is the C2 2 domain.

Part of a ternary complex containing STX1A and RAB27A. Can bind both dominant negative and dominant active mutants of RAB27A. Binds STXBP1, RAB3A, RAB8A and RAB27B. Interacts with MYO5A.

The protein localises to the membrane. The protein resides in the cell membrane. It is found in the cytoplasmic vesicle. Its subcellular location is the secretory vesicle membrane. Functionally, modulates exocytosis of dense-core granules and secretion of hormones in the pancreas and the pituitary. Interacts with vesicles containing negatively charged phospholipids in a Ca(2+)-independent manner. The sequence is that of Synaptotagmin-like protein 4 (SYTL4) from Homo sapiens (Human).